The primary structure comprises 299 residues: Protein-methionine-sulfoxide reductase catalytic subunit MsrP (299 aa).

A signal peptide (tat-type signal) is located at residues 1-44 (MAHRWINDLTPADITPRGAWMNRRQVMAGMAGAGLAAFAGSAQA). Mo-molybdopterin is bound by residues asparagine 59, 62–63 (YE), cysteine 117, threonine 152, asparagine 200, arginine 205, and 216–218 (SIK).

It belongs to the MsrP family. Heterodimer of a catalytic subunit (MsrP) and a heme-binding subunit (MsrQ). The cofactor is Mo-molybdopterin. Predicted to be exported by the Tat system. The position of the signal peptide cleavage has not been experimentally proven.

It localises to the periplasm. The catalysed reaction is L-methionyl-[protein] + a quinone + H2O = L-methionyl-(S)-S-oxide-[protein] + a quinol. It carries out the reaction L-methionyl-[protein] + a quinone + H2O = L-methionyl-(R)-S-oxide-[protein] + a quinol. Its function is as follows. Part of the MsrPQ system that repairs oxidized periplasmic proteins containing methionine sulfoxide residues (Met-O), using respiratory chain electrons. Thus protects these proteins from oxidative-stress damage caused by reactive species of oxygen and chlorine generated by the host defense mechanisms. MsrPQ is essential for the maintenance of envelope integrity under bleach stress, rescuing a wide series of structurally unrelated periplasmic proteins from methionine oxidation. The catalytic subunit MsrP is non-stereospecific, being able to reduce both (R-) and (S-) diastereoisomers of methionine sulfoxide. The sequence is that of Protein-methionine-sulfoxide reductase catalytic subunit MsrP from Ruegeria pomeroyi (strain ATCC 700808 / DSM 15171 / DSS-3) (Silicibacter pomeroyi).